Reading from the N-terminus, the 242-residue chain is NH(3)-dependent NAD(+) synthetase (242 aa).

Gly-27 to Ser-34 is a binding site for ATP. Position 33 (Asp-33) interacts with Mg(2+). Arg-109 serves as a coordination point for deamido-NAD(+). Position 129 (Thr-129) interacts with ATP. Glu-134 serves as a coordination point for Mg(2+). Deamido-NAD(+)-binding residues include Lys-142 and Asp-149. ATP contacts are provided by Lys-158 and Thr-180. His-231–Lys-232 provides a ligand contact to deamido-NAD(+).

Belongs to the NAD synthetase family. Homodimer.

It catalyses the reaction deamido-NAD(+) + NH4(+) + ATP = AMP + diphosphate + NAD(+) + H(+). The protein operates within cofactor biosynthesis; NAD(+) biosynthesis; NAD(+) from deamido-NAD(+) (ammonia route): step 1/1. Catalyzes the ATP-dependent amidation of deamido-NAD to form NAD. Uses ammonia as a nitrogen source. In Thermoplasma volcanium (strain ATCC 51530 / DSM 4299 / JCM 9571 / NBRC 15438 / GSS1), this protein is NH(3)-dependent NAD(+) synthetase.